The sequence spans 187 residues: Reactive Intermediate Deaminase A, chloroplastic (187 aa).

Residues 1–58 (MTWSVFRSINTPTLDLSTALRSTRTPLVAAGVGCATFAGVSLFRMSSRSPPFASLSVS) constitute a chloroplast transit peptide. Substrate is bound at residue Arg165.

It belongs to the RutC family. As to expression, expressed in leaves, petiols, petals, carpels and shoot apex.

It localises to the plastid. The protein resides in the chloroplast. It catalyses the reaction 2-iminobutanoate + H2O = 2-oxobutanoate + NH4(+). The enzyme catalyses 2-iminopropanoate + H2O = pyruvate + NH4(+). The protein operates within amino-acid biosynthesis; L-isoleucine biosynthesis; 2-oxobutanoate from L-threonine. Hydrolyzes the Ser-derived enamine/imine product of Thr dehydratase, protecting the plastidial branched-chain aminotransferase BCAT3 (AC Q9M401) from inactivation. Involved in Ile biosynthesis. This is Reactive Intermediate Deaminase A, chloroplastic from Arabidopsis thaliana (Mouse-ear cress).